Reading from the N-terminus, the 481-residue chain is F-box protein At1g49360 (481 aa).

The F-box domain maps to 105 to 156; the sequence is LKEDLFLPSDLVRLILSRLSFKDNIRSSTVCKAWGDIAASVRVKSRRCWLLY.

The sequence is that of F-box protein At1g49360 from Arabidopsis thaliana (Mouse-ear cress).